Reading from the N-terminus, the 982-residue chain is Protein lin-10 (982 aa).

Residues 1–16 (MSSEAVAQATAATTSP) are compositionally biased toward polar residues. Disordered stretches follow at residues 1–55 (MSSE…MIPP), 119–228 (QPAL…RTDS), 269–327 (TVAD…STVP), 432–511 (FAQQ…GTDD), and 525–593 (QREQ…SKET). Residues 33–44 (KGGGAGGGGGGE) show a composition bias toward gly residues. Residues 119 to 134 (QPALQQPRPSSQASSS) show a composition bias toward low complexity. Polar residues-rich tracts occupy residues 143–156 (RQTAGSVVSSNVSP) and 169–190 (ETSGVVQNNDELLVPTSTSSDV). Residues 211-228 (GEEKSEEKRKLSGDRTDS) show a composition bias toward basic and acidic residues. The span at 301–318 (SLNQLRSSFNLPDDSTTV) shows a compositional bias: polar residues. Composition is skewed to low complexity over residues 432 to 445 (FAQQQIAQSAAPTP) and 454 to 464 (PSTSSGPSGAL). Over residues 490–501 (NGTSTSTTNGAQ) the composition is skewed to polar residues. Residues 539 to 550 (QEAATAAQEAAE) are compositionally biased toward low complexity. The segment covering 577–593 (GAERRGSVDKKKNSKET) has biased composition (basic and acidic residues). The PID domain occupies 604–788 (GVLFRARYLG…VLNSQELLGD (185 aa)). PDZ domains are found at residues 801–886 (EVVV…TVVS) and 892–968 (EVRI…MPTS).

As to quaternary structure, interacts (via N-terminus) with egl-9 isoform e (via catalytic domain); the interaction regulates its trafficking; the interaction is direct. Interacts with rab-6.2 (in GTP-bound form). Post-translationally, phosphorylated on multiple Ser and Thr residues by cdk-5 which regulates its localization. May be hydroxylated by egl-9 isoform e on multiple Pro residues which may prevent phosphorylation by cdk-5. In terms of tissue distribution, expressed in vulval epithelial cells and neurons.

The protein localises to the golgi apparatus. Its subcellular location is the golgi stack membrane. It localises to the trans-Golgi network membrane. It is found in the cytoplasm. The protein resides in the synapse. The protein localises to the perikaryon. Functionally, required specifically for the determination of 3 vulval precursor cell fates P5.p, P6.p and P7.p during late second and early third larval stages; required for basolateral localization of receptor tyrosine kinase let-23. Could have a general but redundant role in development, functioning in diverse cell lineages to control cell fates. Regulates the trafficking of the glr-1 subunit of AMPA-type glutamate receptors (AMPRs) in the ventral nerve cord. This may be partly through interacting with the small GTPase rab-6.2 in its active GTP-bound state. This is Protein lin-10 from Caenorhabditis elegans.